The following is a 405-amino-acid chain: Probable tRNA sulfurtransferase (405 aa).

The THUMP domain maps to Gln60–Glu165. Residues Met183–Leu184, His208–Phe209, Arg265, Gly287, and Gln296 contribute to the ATP site.

The protein belongs to the ThiI family.

The protein resides in the cytoplasm. It catalyses the reaction [ThiI sulfur-carrier protein]-S-sulfanyl-L-cysteine + a uridine in tRNA + 2 reduced [2Fe-2S]-[ferredoxin] + ATP + H(+) = [ThiI sulfur-carrier protein]-L-cysteine + a 4-thiouridine in tRNA + 2 oxidized [2Fe-2S]-[ferredoxin] + AMP + diphosphate. The enzyme catalyses [ThiS sulfur-carrier protein]-C-terminal Gly-Gly-AMP + S-sulfanyl-L-cysteinyl-[cysteine desulfurase] + AH2 = [ThiS sulfur-carrier protein]-C-terminal-Gly-aminoethanethioate + L-cysteinyl-[cysteine desulfurase] + A + AMP + 2 H(+). It participates in cofactor biosynthesis; thiamine diphosphate biosynthesis. Catalyzes the ATP-dependent transfer of a sulfur to tRNA to produce 4-thiouridine in position 8 of tRNAs, which functions as a near-UV photosensor. Also catalyzes the transfer of sulfur to the sulfur carrier protein ThiS, forming ThiS-thiocarboxylate. This is a step in the synthesis of thiazole, in the thiamine biosynthesis pathway. The sulfur is donated as persulfide by IscS. The sequence is that of Probable tRNA sulfurtransferase from Streptococcus suis (strain 98HAH33).